A 743-amino-acid chain; its full sequence is Protein will decrease acetylation (743 aa).

WD repeat units lie at residues 389-428 (ERSR…CRGK), 493-524 (LRGH…MRCW), 535-576 (YRSH…ALII), 577-618 (YAGH…LMRV), 619-660 (FADC…QLAE), and 661-702 (LKDH…PMSD).

Belongs to the WD repeat TAF5 family. As to quaternary structure, component of the Spt-Ada-Gcn5 acetyltransferase (SAGA) complex consisting of wda/Taf5L, Saf6, Taf9, Taf10b, Taf12, Ada1, Spt3, Spt7, Spt20, Sf3b3, Sf3b5, Nipped-A/Tra1, a histone acetyltransferase (HAT) module made up of Gcn5, Ada2b (Isoform B), Ada3 and Sgf29, and a deubiquitinase (DUB) module made up of not/nonstop, Sgf11 and e(y)2 tethered to SAGA by Atxn7. Not essential for the assembly or integrity of the SAGA complex. Not a component of the Ada2a-containing ATAC complex.

It is found in the nucleus. The protein resides in the chromosome. In terms of biological role, component of the transcription regulatory complex SAGA, a multiprotein complex that activates transcription by remodeling chromatin and mediating histone acetylation and deubiquitination. The SAGA complex predominantly acetylates histone H3. Involved in acetylation of histone H3 on 'Lys-10' (H3K9ac) by the SAGA complex in the larval central nervous system. Involved in SAGA complex coactivator functions. Required for oogenesis. The protein is Protein will decrease acetylation of Drosophila melanogaster (Fruit fly).